The following is a 217-amino-acid chain: ATP synthase subunit 4, mitochondrial (217 aa).

Residues 1-14 (MPFARVGALSARHY) constitute a mitochondrion transit peptide. Helical transmembrane passes span 41–61 (GVLATGVLGSIYAISNELYIV) and 66–86 (IVLGVFAAFVVVVAKLGGPGY).

As to quaternary structure, F-type ATP synthases have 2 components, the catalytic core F(1) and the membrane-embedded component F(0), linked together by a central stalk and a peripheral stalk. The central stalk, also called rotor shaft, is often seen as part of F(1). The peripheral stalk is seen as part of F(0). F(0) contains the membrane channel next to the rotor. F-type ATP synthases form dimers but each monomer functions independently in ATP generation. The dimer consists of 17 different polypeptides: ATP1 (subunit alpha, 3 molecules per monomer, part of F(1)), ATP2 (subunit beta, 3 copies per monomer, part of F(1)), ATP3 (subunit gamma, part of the central stalk), ATP4 (subunit b, part of the peripheral stalk), ATP5/OSCP (subunit 5/OSCP, part of the peripheral stalk), ATP6 (subunit a, part of the peripheral stalk), ATP7 (subunit d, part of the peripheral stalk), ATP8 (subunit 8, part of the peripheral stalk), OLI1 (subunit c, part of the rotor, 10 molecules per monomer), ATP14 (subunit h, part of the peripheral stalk), ATP15 (subunit epsilon, part of the central stalk), ATP16 (subunit delta, part of the central stalk), ATP17 (subunit f, part of the peripheral stalk), ATP18 (subunit i/j, part of the peripheral stalk), ATP19 (subunit k, dimer-specific, at interface between monomers), ATP20 (subunit g, at interface between monomers), TIM11 (subunit e, at interface between monomers).

It localises to the mitochondrion inner membrane. In terms of biological role, mitochondrial membrane ATP synthase (F(1)F(0) ATP synthase or Complex V) produces ATP from ADP in the presence of a proton gradient across the membrane which is generated by electron transport complexes of the respiratory chain. F-type ATP synthases consist of two structural domains, F(1) - containing the extramembraneous catalytic core, and F(0) - containing the membrane proton channel, linked together by a central stalk and a peripheral stalk. During catalysis, ATP synthesis in the catalytic domain of F(1) is coupled via a rotary mechanism of the central stalk subunits to proton translocation. Part of the complex F(0) domain and the peripheral stalk, which acts as a stator to hold the catalytic alpha/ATP1(3)beta/ATP2(3) subcomplex and subunit a/ATP6 static relative to the rotary elements. This Yarrowia lipolytica (strain CLIB 122 / E 150) (Yeast) protein is ATP synthase subunit 4, mitochondrial.